Reading from the N-terminus, the 308-residue chain is Barttin (308 aa).

The Cytoplasmic portion of the chain corresponds to 1–5 (MADEK). The regulates channel membrane trafficking and anion conductance stretch occupies residues 1 to 72 (MADEKTFRIG…VPADSDFQGM (72 aa)). Residues 6 to 26 (TFRIGFIVLGLFLLSLGTFLM) form a helical membrane-spanning segment. Over 27–32 (SHDRPQ) the chain is Extracellular. Residues 33–53 (VYGTFYAMGSIMVIGGVLWSM) form a helical membrane-spanning segment. Residues C54 and C56 are each lipidated (S-palmitoyl cysteine). Residues 54–308 (CQCYPKITFV…ELGFEPDVQG (255 aa)) are Cytoplasmic-facing. Residues S79 and S107 each carry the phosphoserine modification. Disordered stretches follow at residues 127–149 (PLLA…HSAQ) and 162–308 (LDEK…DVQG). The segment covering 162–171 (LDEKEGEKSR) has biased composition (basic and acidic residues). The segment covering 172 to 183 (SQSSPPACSQGS) has biased composition (polar residues). The span at 274-283 (EEPEQEEEDL) shows a compositional bias: acidic residues. Position 290 is a phosphoserine (S290).

As to quaternary structure, interacts with CLCNK channels. Forms heteromers with CLCNKA in the thin ascending limb of Henle and with CLCNKB in the thick ascending limb and more distal segments. Post-translationally, palmitoylation is necessary for activation of plasma membrane-inserted CLC-K/barttin channels. As to expression, expressed along the distal nephron.

Its subcellular location is the basolateral cell membrane. In terms of biological role, regulatory subunit of anion-selective CLCNKA:BSND and CLCNKB:BSND heteromeric channels involved in basolateral chloride conductance along the nephron to achieve urine concentration and maintain systemic acid-base homeostasis, and in the stria vascularis of the inner ear to establish the endocochlear potential necessary for normal hearing. Most likely acts as a chaperone that allosterically regulates proper sorting of CLCNKA:BSND and CLCNKB:BSND channels at the basolateral plasma membrane domain and functional switch to ion conducting state. Mediates constitutive opening of channel common gates. The polypeptide is Barttin (Rattus norvegicus (Rat)).